The primary structure comprises 221 residues: ATP-dependent Clp protease proteolytic subunit 3 (221 aa).

The Nucleophile role is filled by Ser-118. His-143 is an active-site residue.

The protein belongs to the peptidase S14 family. Fourteen ClpP subunits assemble into 2 heptameric rings which stack back to back to give a disk-like structure with a central cavity, resembling the structure of eukaryotic proteasomes.

The protein localises to the cytoplasm. It catalyses the reaction Hydrolysis of proteins to small peptides in the presence of ATP and magnesium. alpha-casein is the usual test substrate. In the absence of ATP, only oligopeptides shorter than five residues are hydrolyzed (such as succinyl-Leu-Tyr-|-NHMec, and Leu-Tyr-Leu-|-Tyr-Trp, in which cleavage of the -Tyr-|-Leu- and -Tyr-|-Trp bonds also occurs).. Cleaves peptides in various proteins in a process that requires ATP hydrolysis. Has a chymotrypsin-like activity. Plays a major role in the degradation of misfolded proteins. The chain is ATP-dependent Clp protease proteolytic subunit 3 from Nocardia farcinica (strain IFM 10152).